Consider the following 136-residue polypeptide: uncharacterized protein (136 aa).

A helical membrane pass occupies residues 40–62; the sequence is LFYSISLCVSLLLHISLCVSVYV.

It is found in the membrane. This is an uncharacterized protein from Homo sapiens (Human).